The primary structure comprises 418 residues: Centromere protein U (418 aa).

Residues 1-11 (MAPRGRRRPRP) show a composition bias toward basic residues. A disordered region spans residues 1–76 (MAPRGRRRPR…TYETFDPPLH (76 aa)). A Nuclear localization signal motif is present at residues 6–23 (RRRPRPHRSEGARRSKNT). The span at 12 to 42 (HRSEGARRSKNTLERTHSMKDKAGQKCKPID) shows a compositional bias: basic and acidic residues. Thr78 carries the post-translational modification Phosphothreonine; by PLK1. Residues 88-227 (SKHCGLSLSS…KRKKSRSKAI (140 aa)) form a disordered region. Position 98 is a phosphothreonine (Thr98). The residue at position 108 (Ser108) is a Phosphoserine. At Thr110 the chain carries Phosphothreonine. Ser111, Ser116, and Ser120 each carry phosphoserine. Residues 124–133 (SAKKPGRKLR) show a composition bias toward basic residues. Residues Ser136, Ser139, and Ser141 each carry the phosphoserine modification. Basic and acidic residues predominate over residues 145-165 (SDTRRKVKSAEKISTQRHEVI). Positions 180 to 193 (SVTSKKTGPLSAQP) are enriched in polar residues. Lys185 participates in a covalent cross-link: Glycyl lysine isopeptide (Lys-Gly) (interchain with G-Cter in SUMO2). Residues Ser190 and Ser194 each carry the phosphoserine modification. Positions 208–224 (TQKKGKISHDKRKKSRS) are enriched in basic residues. Ser232 carries the post-translational modification Phosphoserine. 2 coiled-coil regions span residues 297–356 (QMLT…NAAY) and 397–417 (LLGAESHLRNINHQLEKLLDQ). The short motif at 303–320 (KRKNAKMISDIEKKRQRM) is the Nuclear localization signal element.

The protein belongs to the CENP-U/AME1 family. In terms of assembly, component of the CENPA-NAC complex, at least composed of CENPA, CENPC, CENPH, CENPM, CENPN, CENPT and CENPU. The CENPA-NAC complex interacts with the CENPA-CAD complex, composed of CENPI, CENPK, CENPL, CENPO, CENPP, CENPQ, CENPR and CENPS. Interacts with MLF1. Interacts with PLK1. As to quaternary structure, (Microbial infection) Interacts with the N-terminal domain of Kaposi's sarcoma-associated herpesvirus latent nuclear antigen (LNA). Phosphorylated by PLK1 at Thr-78, creating a self-tethering site that specifically interacts with the polo-box domain of PLK1. As to expression, expressed at high levels in the testis, fetal liver, thymus, bone marrow and at lower levels in the lymph nodes, placenta, colon and spleen. Present in all cell lines examined, including B-cells, T-cells, epithelial cells and fibroblast cells. Expressed at high levels in glioblastoma cell lines.

It is found in the cytoplasm. Its subcellular location is the nucleus. The protein localises to the chromosome. It localises to the centromere. The protein resides in the kinetochore. Component of the CENPA-NAC (nucleosome-associated) complex, a complex that plays a central role in assembly of kinetochore proteins, mitotic progression and chromosome segregation. The CENPA-NAC complex recruits the CENPA-CAD (nucleosome distal) complex and may be involved in incorporation of newly synthesized CENPA into centromeres. Plays an important role in the correct PLK1 localization to the mitotic kinetochores. A scaffold protein responsible for the initial recruitment and maintenance of the kinetochore PLK1 population until its degradation. Involved in transcriptional repression. The protein is Centromere protein U (CENPU) of Homo sapiens (Human).